The primary structure comprises 64 residues: Beta-defensin 13 (64 aa).

The signal sequence occupies residues 1-22 (MRIFSLIVAGLVLLIQLYPAWG). 3 disulfides stabilise this stretch: cysteine 30–cysteine 57, cysteine 37–cysteine 51, and cysteine 41–cysteine 58.

This sequence belongs to the beta-defensin family. In terms of tissue distribution, expressed in testis and to a lesser extent in epididymis (caput, corpus and cauda). Also weakly expressed in kidneys.

Its subcellular location is the secreted. In terms of biological role, has antibacterial activity. The chain is Beta-defensin 13 (Defb13) from Mus musculus (Mouse).